The sequence spans 290 residues: 4-hydroxybenzoate octaprenyltransferase (290 aa).

The next 6 helical transmembrane spans lie at 41–61 (WPLL…GCAM), 89–109 (WEAV…IQPL), 133–153 (FFAI…PMAF), 158–178 (DTVP…SVAY), 202–224 (FGRF…YVWI), and 269–289 (WLGG…GTAG).

Belongs to the UbiA prenyltransferase family. Requires Mg(2+) as cofactor.

It is found in the cell inner membrane. The enzyme catalyses all-trans-octaprenyl diphosphate + 4-hydroxybenzoate = 4-hydroxy-3-(all-trans-octaprenyl)benzoate + diphosphate. It functions in the pathway cofactor biosynthesis; ubiquinone biosynthesis. In terms of biological role, catalyzes the prenylation of para-hydroxybenzoate (PHB) with an all-trans polyprenyl group. Mediates the second step in the final reaction sequence of ubiquinone-8 (UQ-8) biosynthesis, which is the condensation of the polyisoprenoid side chain with PHB, generating the first membrane-bound Q intermediate 3-octaprenyl-4-hydroxybenzoate. The sequence is that of 4-hydroxybenzoate octaprenyltransferase from Burkholderia ambifaria (strain MC40-6).